A 148-amino-acid chain; its full sequence is Transcriptional repressor NrdR (148 aa).

A zinc finger lies at 3–32 (CPKCSSEESKVVDSRQAEDAIRRRRVCESC). Residues 47–137 (LLVIKKDDKR…VYRSFKDVSE (91 aa)) enclose the ATP-cone domain.

It belongs to the NrdR family. Requires Zn(2+) as cofactor.

Negatively regulates transcription of bacterial ribonucleotide reductase nrd genes and operons by binding to NrdR-boxes. In Lactococcus lactis subsp. lactis (strain IL1403) (Streptococcus lactis), this protein is Transcriptional repressor NrdR.